We begin with the raw amino-acid sequence, 522 residues long: Amphoterin-induced protein 2 (522 aa).

An N-terminal signal peptide occupies residues 1-39 (MSLRVHTLPTLLGAVVRPGCRELLCLLMITVAVGPGASG). The region spanning 40 to 68 (VCPTACICATDIVSCTNKHLSKVPGNLFR) is the LRRNT domain. Residues 40–398 (VCPTACICAT…RSHAHEAFNT (359 aa)) lie on the Extracellular side of the membrane. Disulfide bonds link Cys41/Cys47 and Cys45/Cys54. 6 LRR repeats span residues 69-90 (LMKR…WIPV), 94-115 (KLNT…SFST), 118-139 (NLKC…VFQE), 142-163 (VLEV…AFGG), 166-187 (QLQK…LYVG), and 193-214 (ELMF…HINL). Residue Asn104 is glycosylated (N-linked (GlcNAc...) asparagine). The LRRCT domain maps to 228 to 284 (NPFVCDCSLYSLLVFWYRRHFSSVMDFKNDYTCRLWSDSRHSRQVLLLQDSFMNCSD). Cystine bridges form between Cys232-Cys260 and Cys234-Cys282. Residues Asn281, Asn288, Asn345, Asn373, Asn381, and Asn384 are each glycosylated (N-linked (GlcNAc...) asparagine). An Ig-like C2-type domain is found at 289–379 (GSFRALGFIH…RLLNETVDVT (91 aa)). Cys310 and Cys363 are joined by a disulfide. A helical membrane pass occupies residues 399–419 (AFTTLAACVASIVLVLLYLYL). At 420 to 522 (TPCPCKCKTK…FSDTPFVAST (103 aa)) the chain is on the cytoplasmic side. Positions 501-522 (RGKSDSDSVNSVFSDTPFVAST) are disordered.

Belongs to the immunoglobulin superfamily. AMIGO family. As to quaternary structure, binds itself as well as AMIGO1 and AMIGO3.

Its subcellular location is the cell membrane. The protein localises to the nucleus. Its function is as follows. Required for depolarization-dependent survival of cultured cerebellar granule neurons. May mediate homophilic as well as heterophilic cell-cell interaction with AMIGO1 or AMIGO3. May contribute to signal transduction through its intracellular domain. This chain is Amphoterin-induced protein 2, found in Pongo abelii (Sumatran orangutan).